Reading from the N-terminus, the 118-residue chain is Holo-[acyl-carrier-protein] synthase (118 aa).

Mg(2+)-binding residues include aspartate 8 and glutamate 58.

Belongs to the P-Pant transferase superfamily. AcpS family. It depends on Mg(2+) as a cofactor.

Its subcellular location is the cytoplasm. It catalyses the reaction apo-[ACP] + CoA = holo-[ACP] + adenosine 3',5'-bisphosphate + H(+). Its function is as follows. Transfers the 4'-phosphopantetheine moiety from coenzyme A to a Ser of acyl-carrier-protein. In Streptococcus pyogenes serotype M1, this protein is Holo-[acyl-carrier-protein] synthase.